Reading from the N-terminus, the 205-residue chain is Imidazoleglycerol-phosphate dehydratase (205 aa).

It belongs to the imidazoleglycerol-phosphate dehydratase family.

The catalysed reaction is D-erythro-1-(imidazol-4-yl)glycerol 3-phosphate = 3-(imidazol-4-yl)-2-oxopropyl phosphate + H2O. It functions in the pathway amino-acid biosynthesis; L-histidine biosynthesis; L-histidine from 5-phospho-alpha-D-ribose 1-diphosphate: step 6/9. The chain is Imidazoleglycerol-phosphate dehydratase (HIS3) from Phaffia rhodozyma (Yeast).